We begin with the raw amino-acid sequence, 485 residues long: N-succinylglutamate 5-semialdehyde dehydrogenase (485 aa).

220–225 (GSANTG) serves as a coordination point for NAD(+). Catalysis depends on residues glutamate 243 and cysteine 278.

Belongs to the aldehyde dehydrogenase family. AstD subfamily.

The catalysed reaction is N-succinyl-L-glutamate 5-semialdehyde + NAD(+) + H2O = N-succinyl-L-glutamate + NADH + 2 H(+). It functions in the pathway amino-acid degradation; L-arginine degradation via AST pathway; L-glutamate and succinate from L-arginine: step 4/5. Its function is as follows. Catalyzes the NAD-dependent reduction of succinylglutamate semialdehyde into succinylglutamate. The protein is N-succinylglutamate 5-semialdehyde dehydrogenase of Vibrio parahaemolyticus serotype O3:K6 (strain RIMD 2210633).